The sequence spans 208 residues: Uracil phosphoribosyltransferase (208 aa).

5-phospho-alpha-D-ribose 1-diphosphate is bound by residues Arg78, Arg103, and 130-138 (DPMLATGGS). Residues Ile193 and 198–200 (GDA) each bind uracil. 5-phospho-alpha-D-ribose 1-diphosphate is bound at residue Asp199.

The protein belongs to the UPRTase family. Mg(2+) is required as a cofactor.

It catalyses the reaction UMP + diphosphate = 5-phospho-alpha-D-ribose 1-diphosphate + uracil. It participates in pyrimidine metabolism; UMP biosynthesis via salvage pathway; UMP from uracil: step 1/1. Allosterically activated by GTP. Its function is as follows. Catalyzes the conversion of uracil and 5-phospho-alpha-D-ribose 1-diphosphate (PRPP) to UMP and diphosphate. The protein is Uracil phosphoribosyltransferase of Neisseria meningitidis serogroup B (strain ATCC BAA-335 / MC58).